We begin with the raw amino-acid sequence, 426 residues long: tRNA(Met) cytidine acetate ligase (426 aa).

ATP contacts are provided by residues 7-20, Gly101, Asn168, and Arg193; that span reads VVEYNPFHNGHLFH.

It belongs to the TmcAL family.

The protein resides in the cytoplasm. It carries out the reaction cytidine(34) in elongator tRNA(Met) + acetate + ATP = N(4)-acetylcytidine(34) in elongator tRNA(Met) + AMP + diphosphate. Its function is as follows. Catalyzes the formation of N(4)-acetylcytidine (ac(4)C) at the wobble position of elongator tRNA(Met), using acetate and ATP as substrates. First activates an acetate ion to form acetyladenylate (Ac-AMP) and then transfers the acetyl group to tRNA to form ac(4)C34. The chain is tRNA(Met) cytidine acetate ligase from Kosmotoga olearia (strain ATCC BAA-1733 / DSM 21960 / TBF 19.5.1).